The sequence spans 217 residues: 5'-methylthioadenosine/S-adenosylhomocysteine nucleosidase (217 aa).

Catalysis depends on glutamate 11, which acts as the Proton acceptor. Substrate is bound by residues glycine 77, valine 139, and 159-160 (MD). Residue aspartate 183 is the Proton donor of the active site.

The protein belongs to the PNP/UDP phosphorylase family. MtnN subfamily.

It carries out the reaction S-adenosyl-L-homocysteine + H2O = S-(5-deoxy-D-ribos-5-yl)-L-homocysteine + adenine. The enzyme catalyses S-methyl-5'-thioadenosine + H2O = 5-(methylsulfanyl)-D-ribose + adenine. It catalyses the reaction 5'-deoxyadenosine + H2O = 5-deoxy-D-ribose + adenine. It functions in the pathway amino-acid biosynthesis; L-methionine biosynthesis via salvage pathway; S-methyl-5-thio-alpha-D-ribose 1-phosphate from S-methyl-5'-thioadenosine (hydrolase route): step 1/2. Its function is as follows. Catalyzes the irreversible cleavage of the glycosidic bond in both 5'-methylthioadenosine (MTA) and S-adenosylhomocysteine (SAH/AdoHcy) to adenine and the corresponding thioribose, 5'-methylthioribose and S-ribosylhomocysteine, respectively. Also cleaves 5'-deoxyadenosine, a toxic by-product of radical S-adenosylmethionine (SAM) enzymes, into 5-deoxyribose and adenine. This is 5'-methylthioadenosine/S-adenosylhomocysteine nucleosidase (mtnN) from Thermotoga maritima (strain ATCC 43589 / DSM 3109 / JCM 10099 / NBRC 100826 / MSB8).